The sequence spans 233 residues: DFVYQFKGLCYYTNGTQRIRSVDRRFYNQEEFLRYDSDVGEFRALTELGRSWADDWNSQKEILEQKRAEMDTVCRYNYEETEVPTSLRRLERPNVAISLSRTEALNHHNLLVCSVTDFYPAQIKVRWFRNGQEETTGVVSTQLIKNGDWTFQILVMLEMTPQRGDVYTCHVDHASLESPVTVEWRAQSESAQSKMLSGIGGLVLGVIFLGLGLFIRHKRQKGPQGPPPAGLLQ.

Residues 1 to 80 (DFVYQFKGLC…DTVCRYNYEE (80 aa)) form a beta-1 region. The Extracellular segment spans residues 1–194 (DFVYQFKGLC…RAQSESAQSK (194 aa)). The N-linked (GlcNAc...) asparagine glycan is linked to Asn-14. The beta-2 stretch occupies residues 81 to 184 (TEVPTSLRRL…SLESPVTVEW (104 aa)). The Ig-like C1-type domain maps to 93-181 (PNVAISLSRT…DHASLESPVT (89 aa)). The connecting peptide stretch occupies residues 185–194 (RAQSESAQSK). A helical transmembrane segment spans residues 195–215 (MLSGIGGLVLGVIFLGLGLFI). The Cytoplasmic segment spans residues 216 to 233 (RHKRQKGPQGPPPAGLLQ).

This sequence belongs to the MHC class II family.

Its subcellular location is the membrane. Functionally, involved in the presentation of foreign antigens to the immune system. In Rattus norvegicus (Rat), this protein is Rano class II histocompatibility antigen, A beta chain (RT1-B).